A 370-amino-acid polypeptide reads, in one-letter code: Actin-related protein 2/3 complex subunit 1A (370 aa).

6 WD repeats span residues 6-45, 50-89, 140-179, 202-241, 244-284, and 322-365; these read FLLE…WTKA, EHNG…WKPT, PIRS…VDEK, GTGG…QVST, TEFL…TFVS, and LHQN…SSIQ.

Belongs to the WD repeat ARPC1 family. Probable component of the Arp2/3 complex in which it may replace ARPC1B.

It is found in the cytoplasm. It localises to the cytoskeleton. The protein localises to the nucleus. Probably functions as a component of the Arp2/3 complex which is involved in regulation of actin polymerization and together with an activating nucleation-promoting factor (NPF) mediates the formation of branched actin networks. In addition to its role in the cytoplasmic cytoskeleton, the Arp2/3 complex also promotes actin polymerization in the nucleus, thereby regulating gene transcription and repair of damaged DNA. This Rattus norvegicus (Rat) protein is Actin-related protein 2/3 complex subunit 1A (Arpc1a).